The chain runs to 148 residues: uncharacterized protein (148 aa).

One can recognise an HTH asnC-type domain in the interval 4–65 (MDKVDLQLIK…IPNLEKLNYM (62 aa)). Residues 23–42 (YRELAEMLGTTRQRVARKVD) constitute a DNA-binding region (H-T-H motif).

This is an uncharacterized protein from Pyrococcus furiosus (strain ATCC 43587 / DSM 3638 / JCM 8422 / Vc1).